A 423-amino-acid polypeptide reads, in one-letter code: Imidazolonepropionase (423 aa).

The Fe(3+) site is built by histidine 87 and histidine 89. Zn(2+) contacts are provided by histidine 87 and histidine 89. 4-imidazolone-5-propanoate contacts are provided by arginine 96, tyrosine 159, and histidine 192. Tyrosine 159 is a binding site for N-formimidoyl-L-glutamate. A Fe(3+)-binding site is contributed by histidine 257. Position 257 (histidine 257) interacts with Zn(2+). Position 260 (glutamate 260) interacts with 4-imidazolone-5-propanoate. Fe(3+) is bound at residue aspartate 331. A Zn(2+)-binding site is contributed by aspartate 331. Positions 333 and 335 each coordinate N-formimidoyl-L-glutamate. Serine 336 serves as a coordination point for 4-imidazolone-5-propanoate.

This sequence belongs to the metallo-dependent hydrolases superfamily. HutI family. Requires Zn(2+) as cofactor. It depends on Fe(3+) as a cofactor.

It is found in the cytoplasm. It catalyses the reaction 4-imidazolone-5-propanoate + H2O = N-formimidoyl-L-glutamate. Its pathway is amino-acid degradation; L-histidine degradation into L-glutamate; N-formimidoyl-L-glutamate from L-histidine: step 3/3. Functionally, catalyzes the hydrolytic cleavage of the carbon-nitrogen bond in imidazolone-5-propanoate to yield N-formimidoyl-L-glutamate. It is the third step in the universal histidine degradation pathway. This is Imidazolonepropionase from Porphyromonas gingivalis (strain ATCC 33277 / DSM 20709 / CIP 103683 / JCM 12257 / NCTC 11834 / 2561).